A 1623-amino-acid chain; its full sequence is RING finger protein 17 (1623 aa).

The segment at 1-22 is disordered; it reads MAAEASKTGPSRSSYQRMGRKS. The segment at 32–75 adopts an RING-type zinc-finger fold; it reads CTRCGRRVSRSSGHHCELQCGHAFCELCLLMTEECTTIICPDCE. Lys-234 carries the post-translational modification N6-acetyllysine. 3 consecutive Tudor domains span residues 726–784, 962–1021, and 1228–1285; these read CPVQ…FLNA, KWEN…LKTM, and FWKK…PDIP. A disordered region spans residues 1438–1462; that stretch reads NQSNQHSDTDDSGVSGESESESLDE. Positions 1479 to 1539 constitute a Tudor 4 domain; the sequence is DFRTEMPCLA…CQIPSHLMRY (61 aa).

As to quaternary structure, interacts with MXD1, MXD3, MXD4, MXI1 and PIWIL1. Self-associates. As to expression, testis specific.

It is found in the cytoplasm. The protein resides in the nucleus. Its function is as follows. Seems to be involved in regulation of transcriptional activity of MYC. In vitro, inhibits DNA-binding activity of Mad-MAX heterodimers. Can recruit Mad transcriptional repressors (MXD1, MXD3, MXD4 and MXI1) to the cytoplasm. May be involved in spermiogenesis. The chain is RING finger protein 17 (RNF17) from Homo sapiens (Human).